The sequence spans 364 residues: Carbamoyl phosphate synthase pyrimidine-specific small chain (364 aa).

The segment at 1-171 is CPSase; sequence MKRRLVLENG…AYPSPGRGKR (171 aa). L-glutamine is bound by residues Ser-45, Gly-219, and Gly-221. The Glutamine amidotransferase type-1 domain maps to 171–356; it reads RIVLVDFGMK…IEMIETTEKE (186 aa). Residue Cys-246 is the Nucleophile of the active site. Residues Leu-247, Gln-250, Asn-288, Gly-290, and Tyr-291 each coordinate L-glutamine. Residues His-329 and Glu-331 contribute to the active site.

It belongs to the CarA family. Composed of two chains; the small (or glutamine) chain promotes the hydrolysis of glutamine to ammonia, which is used by the large (or ammonia) chain to synthesize carbamoyl phosphate. Tetramer of heterodimers (alpha,beta)4. Interacts with BrxC.

The enzyme catalyses hydrogencarbonate + L-glutamine + 2 ATP + H2O = carbamoyl phosphate + L-glutamate + 2 ADP + phosphate + 2 H(+). It catalyses the reaction L-glutamine + H2O = L-glutamate + NH4(+). Its pathway is pyrimidine metabolism; UMP biosynthesis via de novo pathway; (S)-dihydroorotate from bicarbonate: step 1/3. In terms of biological role, small subunit of the glutamine-dependent carbamoyl phosphate synthetase (CPSase). CPSase catalyzes the formation of carbamoyl phosphate from the ammonia moiety of glutamine, carbonate, and phosphate donated by ATP, constituting the first step of the biosynthetic pathway leading to arginine and/or urea. The small subunit (glutamine amidotransferase) binds and cleaves glutamine to supply the large subunit with the substrate ammonia. In Bacillus subtilis (strain 168), this protein is Carbamoyl phosphate synthase pyrimidine-specific small chain.